The sequence spans 214 residues: Pyridoxine/pyridoxamine 5'-phosphate oxidase (214 aa).

Substrate-binding positions include 8 to 11 (RTNY) and K66. Residues 61–66 (RIVLIK), 76–77 (FT), R82, K83, and Q105 contribute to the FMN site. Y123, R127, and S131 together coordinate substrate. FMN contacts are provided by residues 140 to 141 (QS) and W184. A substrate-binding site is contributed by 190–192 (RLH). R194 serves as a coordination point for FMN.

The protein belongs to the pyridoxamine 5'-phosphate oxidase family. Homodimer. The cofactor is FMN.

The catalysed reaction is pyridoxamine 5'-phosphate + O2 + H2O = pyridoxal 5'-phosphate + H2O2 + NH4(+). It carries out the reaction pyridoxine 5'-phosphate + O2 = pyridoxal 5'-phosphate + H2O2. Its pathway is cofactor metabolism; pyridoxal 5'-phosphate salvage; pyridoxal 5'-phosphate from pyridoxamine 5'-phosphate: step 1/1. The protein operates within cofactor metabolism; pyridoxal 5'-phosphate salvage; pyridoxal 5'-phosphate from pyridoxine 5'-phosphate: step 1/1. In terms of biological role, catalyzes the oxidation of either pyridoxine 5'-phosphate (PNP) or pyridoxamine 5'-phosphate (PMP) into pyridoxal 5'-phosphate (PLP). The sequence is that of Pyridoxine/pyridoxamine 5'-phosphate oxidase from Burkholderia mallei (strain NCTC 10247).